The chain runs to 527 residues: Protein PyrBI (527 aa).

The tract at residues 1 to 342 (MKRDFLGRTL…MFGGALEAPF (342 aa)) is aspartate carbamoyltransferase. The interval 343–357 (DTSKKEEKPEEDFII) is linker. Residues 368 to 527 (VQKEGKRGIK…PHSFEEIWSI (160 aa)) form an aspartate carbamoyltransferase regulatory region region. Zn(2+) contacts are provided by Cys-483, Cys-488, Cys-512, and Cys-515.

It in the N-terminal section; belongs to the aspartate/ornithine carbamoyltransferase superfamily. ATCase family. In the C-terminal section; belongs to the PyrI family.

The enzyme catalyses carbamoyl phosphate + L-aspartate = N-carbamoyl-L-aspartate + phosphate + H(+). It functions in the pathway pyrimidine metabolism; UMP biosynthesis via de novo pathway; (S)-dihydroorotate from bicarbonate: step 2/3. This Thermotoga maritima (strain ATCC 43589 / DSM 3109 / JCM 10099 / NBRC 100826 / MSB8) protein is Protein PyrBI (pyrBI).